A 448-amino-acid polypeptide reads, in one-letter code: N-succinylarginine dihydrolase (448 aa).

Residues 19–28 (GGLSYGNVAS), N110, and 137–138 (HR) contribute to the substrate site. E174 is a catalytic residue. R214 is a substrate binding site. H250 is an active-site residue. Positions 252 and 365 each coordinate substrate. C371 functions as the Nucleophile in the catalytic mechanism.

The protein belongs to the succinylarginine dihydrolase family. In terms of assembly, homodimer.

The catalysed reaction is N(2)-succinyl-L-arginine + 2 H2O + 2 H(+) = N(2)-succinyl-L-ornithine + 2 NH4(+) + CO2. It functions in the pathway amino-acid degradation; L-arginine degradation via AST pathway; L-glutamate and succinate from L-arginine: step 2/5. Functionally, catalyzes the hydrolysis of N(2)-succinylarginine into N(2)-succinylornithine, ammonia and CO(2). The polypeptide is N-succinylarginine dihydrolase (Pseudomonas paraeruginosa (strain DSM 24068 / PA7) (Pseudomonas aeruginosa (strain PA7))).